The sequence spans 1139 residues: Autophagy-related protein 23 (1139 aa).

Disordered regions lie at residues 1–148 (MFQR…EMSP), 225–327 (STDK…YDDE), 356–388 (LTTA…SVKD), 475–569 (KNEK…DTAG), 648–674 (KKIS…KTEY), 720–767 (RQES…RETE), 786–828 (EDAQ…SKLR), 935–961 (AAVE…TEDL), and 977–1012 (HERD…ELRT). Residues 7–18 (SAIDRTIAEEQA) show a composition bias toward basic and acidic residues. A compositionally biased stretch (low complexity) spans 19 to 37 (RQQTATQSRSPSRTGSTSS). Coiled-coil stretches lie at residues 142–170 (KLQE…LLRS) and 215–259 (DMVM…STDQ). Composition is skewed to basic and acidic residues over residues 225–247 (STDK…KLEE), 261–273 (KTSD…DAQD), 373–385 (ATRE…DVAS), and 475–494 (KNEK…KLES). Positions 323–495 (SYDDEIPQLQ…TDLTKKLESK (173 aa)) form a coiled coil. A compositionally biased stretch (low complexity) spans 496–522 (PAPAMLTPAATPMPTVLQPAATSATAA). Residues 526–537 (GKKKNNKKKKGK) are compositionally biased toward basic residues. Positions 566–1067 (DTAGNAELKA…AAQTKLVASS (502 aa)) form a coiled coil. A compositionally biased stretch (low complexity) spans 651–661 (SSSTSDAEASS). Composition is skewed to basic and acidic residues over residues 728–767 (ATKE…RETE), 786–815 (EDAQ…KAEQ), 935–945 (AAVEERDRIED), and 977–1011 (HERD…DELR). Residues 1082–1132 (SPAGAPDTVYLKTILLQFLEQKDTKLRAQLVPVLGKLLRFDKTDEQKWQKA) form the GRIP domain.

This sequence belongs to the ATG23 family. As to quaternary structure, forms a complex with ATG9 and ATG27.

It localises to the cytoplasm. It is found in the preautophagosomal structure membrane. Required for cytoplasm to vacuole transport (Cvt) vesicle formation and efficient autophagy. Plays a role in ATG protein retrieval from the pre-autophagosomal structure (PAS) and is especially required for autophagy-dependent cycling of ATG9. Autophagy is required for proper vegetative growth, asexual/sexual reproduction, and full virulence. Autophagy is particularly involved in the biosynthesis of deoxynivalenol (DON), an important virulence determinant. The chain is Autophagy-related protein 23 from Gibberella zeae (strain ATCC MYA-4620 / CBS 123657 / FGSC 9075 / NRRL 31084 / PH-1) (Wheat head blight fungus).